We begin with the raw amino-acid sequence, 653 residues long: tRNA 5-methylaminomethyl-2-thiouridine biosynthesis bifunctional protein MnmC (653 aa).

The interval 1–233 (MKTAPITPGR…KRDITVARFT (233 aa)) is tRNA (mnm(5)s(2)U34)-methyltransferase. Positions 258-653 (IGAGLAGCAA…YALPRWRSDS (396 aa)) are FAD-dependent cmnm(5)s(2)U34 oxidoreductase.

It in the N-terminal section; belongs to the methyltransferase superfamily. tRNA (mnm(5)s(2)U34)-methyltransferase family. The protein in the C-terminal section; belongs to the DAO family. Requires FAD as cofactor.

It is found in the cytoplasm. The catalysed reaction is 5-aminomethyl-2-thiouridine(34) in tRNA + S-adenosyl-L-methionine = 5-methylaminomethyl-2-thiouridine(34) in tRNA + S-adenosyl-L-homocysteine + H(+). Catalyzes the last two steps in the biosynthesis of 5-methylaminomethyl-2-thiouridine (mnm(5)s(2)U) at the wobble position (U34) in tRNA. Catalyzes the FAD-dependent demodification of cmnm(5)s(2)U34 to nm(5)s(2)U34, followed by the transfer of a methyl group from S-adenosyl-L-methionine to nm(5)s(2)U34, to form mnm(5)s(2)U34. In Methylibium petroleiphilum (strain ATCC BAA-1232 / LMG 22953 / PM1), this protein is tRNA 5-methylaminomethyl-2-thiouridine biosynthesis bifunctional protein MnmC.